The sequence spans 499 residues: Maturase K (499 aa).

Belongs to the intron maturase 2 family. MatK subfamily.

Its subcellular location is the plastid. It is found in the chloroplast. Functionally, usually encoded in the trnK tRNA gene intron. Probably assists in splicing its own and other chloroplast group II introns. In Ceratonia siliqua (Carob), this protein is Maturase K.